A 96-amino-acid polypeptide reads, in one-letter code: Nucleoid-associated protein CF0672 (96 aa).

Belongs to the YbaB/EbfC family. As to quaternary structure, homodimer.

It is found in the cytoplasm. The protein resides in the nucleoid. Binds to DNA and alters its conformation. May be involved in regulation of gene expression, nucleoid organization and DNA protection. This chain is Nucleoid-associated protein CF0672, found in Chlamydia felis (strain Fe/C-56) (Chlamydophila felis).